A 476-amino-acid chain; its full sequence is UDP-glucose 6-dehydrogenase (476 aa).

NAD(+)-binding positions include 7–12, D32, R37, 85–89, 126–127, and E161; these read GAGYVG, VNTPT, and ST. Substrate-binding positions include 157-161, 216-220, R256, and 263-269; these read EFLAE, KLAAN, and QASVGFG. The Nucleophile role is filled by C272. 272 to 275 is a binding site for NAD(+); that stretch reads CFQK. 334–335 lines the substrate pocket; it reads FK. R342 provides a ligand contact to NAD(+). R439 is a binding site for substrate.

Belongs to the UDP-glucose/GDP-mannose dehydrogenase family.

It carries out the reaction UDP-alpha-D-glucose + 2 NAD(+) + H2O = UDP-alpha-D-glucuronate + 2 NADH + 3 H(+). It participates in nucleotide-sugar biosynthesis; UDP-alpha-D-glucuronate biosynthesis; UDP-alpha-D-glucuronate from UDP-alpha-D-glucose: step 1/1. Its function is as follows. Involved in the biosynthesis of glycosaminoglycans; hyaluronan, chondroitin sulfate and heparan sulfate. Required for wingless signaling in different tissues. The polypeptide is UDP-glucose 6-dehydrogenase (sgl) (Drosophila melanogaster (Fruit fly)).